We begin with the raw amino-acid sequence, 466 residues long: Ribulose bisphosphate carboxylase large chain (466 aa).

Residue Lys-5 is modified to N6,N6,N6-trimethyllysine. Substrate-binding residues include Asn-114 and Thr-164. The Proton acceptor role is filled by Lys-166. Lys-168 contributes to the substrate binding site. Residues Lys-192, Asp-194, and Glu-195 each contribute to the Mg(2+) site. Lys-192 is modified (N6-carboxylysine). His-285 (proton acceptor) is an active-site residue. 3 residues coordinate substrate: Arg-286, His-318, and Ser-370.

This sequence belongs to the RuBisCO large chain family. Type I subfamily. Heterohexadecamer of 8 large chains and 8 small chains; disulfide-linked. The disulfide link is formed within the large subunit homodimers. It depends on Mg(2+) as a cofactor. In terms of processing, the disulfide bond which can form in the large chain dimeric partners within the hexadecamer appears to be associated with oxidative stress and protein turnover.

The protein localises to the plastid. The protein resides in the chloroplast. It catalyses the reaction 2 (2R)-3-phosphoglycerate + 2 H(+) = D-ribulose 1,5-bisphosphate + CO2 + H2O. The enzyme catalyses D-ribulose 1,5-bisphosphate + O2 = 2-phosphoglycolate + (2R)-3-phosphoglycerate + 2 H(+). Its function is as follows. RuBisCO catalyzes two reactions: the carboxylation of D-ribulose 1,5-bisphosphate, the primary event in carbon dioxide fixation, as well as the oxidative fragmentation of the pentose substrate in the photorespiration process. Both reactions occur simultaneously and in competition at the same active site. This is Ribulose bisphosphate carboxylase large chain from Bixa orellana (Lipstick tree).